The sequence spans 43 residues: Protein PsbN (43 aa).

The helical transmembrane segment at 5 to 27 (TVLSIFISSLLLGITGYSIYTAF) threads the bilayer.

This sequence belongs to the PsbN family.

Its subcellular location is the plastid. The protein localises to the chloroplast thylakoid membrane. In terms of biological role, may play a role in photosystem I and II biogenesis. This is Protein PsbN from Porphyra purpurea (Red seaweed).